The sequence spans 217 residues: ITG-like peptide (217 aa).

Positions 1–21 (MHRTMAVTAVLVLSAAGAAHA) are cleaved as a signal peptide. A propeptide spanning residues 22 to 208 (WGGLFNRFSS…REFVQHTAGE (187 aa)) is cleaved from the precursor.

In terms of tissue distribution, ITG-like peptide: Expressed in corpora cardiaca (CC), corpora allata (CA), antennal lobe (AL) and gnathal ganglion (GNG) (at protein level). Expression in AL detected in all animals, expression in GNG detected in most animals and in CA and CC detected in few animals (at protein level).

It is found in the secreted. The polypeptide is ITG-like peptide (Agrotis ipsilon (Black cutworm moth)).